Reading from the N-terminus, the 336-residue chain is Flavonoid 4'-O-methyltransferase 3 (336 aa).

S-adenosyl-L-methionine is bound by residues Tyr-140 and Asp-203. His-241 functions as the Proton acceptor in the catalytic mechanism.

It belongs to the class I-like SAM-binding methyltransferase superfamily. Cation-independent O-methyltransferase family. Homodimer. In terms of tissue distribution, expressed in leaves.

The catalysed reaction is scutellarein 7-methyl ether + S-adenosyl-L-methionine = ladanein + S-adenosyl-L-homocysteine + H(+). It catalyses the reaction cirsimaritin + S-adenosyl-L-methionine = salvigenin + S-adenosyl-L-homocysteine + H(+). It carries out the reaction cirsiliol + S-adenosyl-L-methionine = eupatorin + S-adenosyl-L-homocysteine + H(+). The enzyme catalyses genkwanin + S-adenosyl-L-methionine = apigenin 4',7-dimethyl ether + S-adenosyl-L-homocysteine. The protein operates within flavonoid metabolism. Substrate inhibition by genkwanin (GENK) at concentrations above 2.5 mM. Its function is as follows. Flavonoid 4'-O-methyltransferase involved in the biosynthesis of polymethoxylated flavonoids natural products such as nevadensin and salvigenin, aroma compounds which contribute to the flavor of sweet basil, and exhibit pharmacological activities such as anti-allergic, anti-oxidant, antibacterial, anti-proliferative, and anti-inflammatory effects. Catalyzes S-adenosylmethionine-dependent regioselective 4'-O-methylation of flavonoids; active on various hydroxylated flavonoid substrates, including scutellarein-7-methyl ether (SCU7Me) and cirsimaritin (CIRM), and, with a lower efficiency, hispidulin, ladanein (LAD), cirsioliol (CIRL) and genkwanin (GENK). This Ocimum basilicum (Sweet basil) protein is Flavonoid 4'-O-methyltransferase 3.